Here is an 803-residue protein sequence, read N- to C-terminus: Zinc finger and BTB domain-containing protein 17 (803 aa).

Residues 1–104 (MDFPQHSQHV…VATFLQMQDI (104 aa)) enclose the BTB domain. Positions 116-295 (EPATSPGGNA…GLRSGTYGDR (180 aa)) are disordered. Position 120 is a phosphoserine (S120). A compositionally biased stretch (basic and acidic residues) spans 132–142 (GGDKRAKEEKV). Composition is skewed to low complexity over residues 171–180 (GQAQSAASGA) and 206–217 (AAAEAEAALSES). Acidic residues-rich tracts occupy residues 233–244 (EQKEQEEQEEEG) and 261–272 (EAPEENENEESA). Residues 269–308 (EESAGTDSGQELGSEARGLRSGTYGDRTESKAYGSVIHKC) form an interaction with MYC region. 13 consecutive C2H2-type zinc fingers follow at residues 306 to 328 (HKCE…IRIH), 334 to 356 (FSCR…EKTH), 362 to 384 (YGCE…KKRH), 390 to 412 (YRCE…QLVH), 418 to 440 (YQCD…LETH), 446 to 468 (HKCP…LKIH), 474 to 496 (LKCR…LRIH), 502 to 524 (YVCI…VRIH), 530 to 552 (CQCV…VRQH), 558 to 580 (YVCE…IRHH), 586 to 608 (HKCS…IIIH), 614 to 637 (YLCD…KTVH), and 717 to 739 (YACD…VRIH). K397 is covalently cross-linked (Glycyl lysine isopeptide (Lys-Gly) (interchain with G-Cter in ubiquitin)). Residue K481 forms a Glycyl lysine isopeptide (Lys-Gly) (interchain with G-Cter in ubiquitin) linkage. The interaction with MYC stretch occupies residues 637–718 (HQGKAGIKIL…EDPNTHILYA (82 aa)). The tract at residues 637–803 (HQGKAGIKIL…TAPECPPPAE (167 aa)) is interaction with HCFC1. Positions 779 to 803 (RDGAEGQPALAETSPTAPECPPPAE) are disordered.

It belongs to the krueppel C2H2-type zinc-finger protein family. As to quaternary structure, homooligomerizes (via the BTB/POZ domain), multimerization is required for DNA binding. Interacts (via the C-terminal zinc fingers) with GIF1; the interaction results in the recruitment of MYB to the CDKN1A/p21 and CDKN1B promoters and repression of transcription. Interacts with TRAF2, interfering with the binding of UBC13 to TRAF2, and inhibiting TRAF2 E3 ligase activity. Interacts with MYC (via the C-terminal helix-loop-helix motif); the interaction inhibits ZBTB17 transactivation and growth arrest activities and renders it insoluble in the nucleus. Also interacts with HCFC1, MAGEA4 and TMPRSS11A. Interacts with BCL6; the interaction inhibits ZBTB17 transactivation activity on target genes involved in cell cycle arrest. Interacts with ZBTB49 isoform 3/ZNF509S1; this interaction blocks ZBTB17-mediated repression of RB1. Post-translationally, undergoes 'Lys-48'-linked polyubiquitination at Lys-397 and Lys-481 and subsequent proteasomal degradation in a TRAF2-dependent manner. As to expression, expressed in germinal center B-cells.

The protein resides in the nucleus. Transcription factor that can function as an activator or repressor depending on its binding partners, and by targeting negative regulators of cell cycle progression. Plays a critical role in early lymphocyte development, where it is essential to prevent apoptosis in lymphoid precursors, allowing them to survive in response to IL7 and undergo proper lineage commitment. Has been shown to bind to the promoters of adenovirus major late protein and cyclin D1 and activate transcription. Required for early embryonic development during gastrulation. Represses RB1 transcription; this repression can be blocked by interaction with ZBTB49 isoform 3/ZNF509S1. This is Zinc finger and BTB domain-containing protein 17 (ZBTB17) from Homo sapiens (Human).